A 96-amino-acid polypeptide reads, in one-letter code: Large ribosomal subunit protein uL23 (96 aa).

The protein belongs to the universal ribosomal protein uL23 family. As to quaternary structure, part of the 50S ribosomal subunit. Contacts protein L29, and trigger factor when it is bound to the ribosome.

Functionally, one of the early assembly proteins it binds 23S rRNA. One of the proteins that surrounds the polypeptide exit tunnel on the outside of the ribosome. Forms the main docking site for trigger factor binding to the ribosome. In Bacillus cereus (strain ATCC 10987 / NRS 248), this protein is Large ribosomal subunit protein uL23.